Consider the following 429-residue polypeptide: GTPase Obg (429 aa).

Residues 1-158 (MFVDQVKIYV…RNVQLELKVL (158 aa)) enclose the Obg domain. The interval 124–145 (RGNKRFATPANPAPELSENGEP) is disordered. Residues 159–329 (ADVGLVGFPS…LLLAIADKLE (171 aa)) form the OBG-type G domain. Residues 165-172 (GFPSVGKS), 190-194 (FTTIV), 212-215 (DLPG), 282-285 (NKMD), and 310-312 (SAV) contribute to the GTP site. Serine 172 and threonine 192 together coordinate Mg(2+). One can recognise an OCT domain in the interval 351–429 (KYVAEEPDFE…LLDYEFEFMD (79 aa)).

Belongs to the TRAFAC class OBG-HflX-like GTPase superfamily. OBG GTPase family. As to quaternary structure, monomer. It depends on Mg(2+) as a cofactor.

The protein localises to the cytoplasm. Functionally, an essential GTPase which binds GTP, GDP and possibly (p)ppGpp with moderate affinity, with high nucleotide exchange rates and a fairly low GTP hydrolysis rate. Plays a role in control of the cell cycle, stress response, ribosome biogenesis and in those bacteria that undergo differentiation, in morphogenesis control. The polypeptide is GTPase Obg (Listeria monocytogenes serotype 4b (strain F2365)).